A 607-amino-acid polypeptide reads, in one-letter code: DNA primase (607 aa).

The CHC2-type zinc finger occupies 39 to 63 (CPFHDDKNPSMSISSSKNIFKCWAC). In terms of domain architecture, Toprim spans 267 to 350 (NQLFIVEGYF…IVEIVQWEHN (84 aa)). Residues Glu-273, Asp-319, and Asp-321 each contribute to the Mg(2+) site.

This sequence belongs to the DnaG primase family. In terms of assembly, monomer. Interacts with DnaB. Zn(2+) is required as a cofactor. It depends on Mg(2+) as a cofactor.

The catalysed reaction is ssDNA + n NTP = ssDNA/pppN(pN)n-1 hybrid + (n-1) diphosphate.. In terms of biological role, RNA polymerase that catalyzes the synthesis of short RNA molecules used as primers for DNA polymerase during DNA replication. The polypeptide is DNA primase (Mycoplasma genitalium (strain ATCC 33530 / DSM 19775 / NCTC 10195 / G37) (Mycoplasmoides genitalium)).